A 405-amino-acid polypeptide reads, in one-letter code: NADH-quinone oxidoreductase subunit D (405 aa).

The protein belongs to the complex I 49 kDa subunit family. As to quaternary structure, NDH-1 is composed of 14 different subunits. Subunits NuoB, C, D, E, F, and G constitute the peripheral sector of the complex.

The protein resides in the cell inner membrane. The catalysed reaction is a quinone + NADH + 5 H(+)(in) = a quinol + NAD(+) + 4 H(+)(out). In terms of biological role, NDH-1 shuttles electrons from NADH, via FMN and iron-sulfur (Fe-S) centers, to quinones in the respiratory chain. The immediate electron acceptor for the enzyme in this species is believed to be ubiquinone. Couples the redox reaction to proton translocation (for every two electrons transferred, four hydrogen ions are translocated across the cytoplasmic membrane), and thus conserves the redox energy in a proton gradient. This chain is NADH-quinone oxidoreductase subunit D, found in Leptospira borgpetersenii serovar Hardjo-bovis (strain L550).